Consider the following 544-residue polypeptide: Methionine--tRNA ligase (544 aa).

The short motif at 10 to 20 (PYANGSLHLGH) is the 'HIGH' region element. Zn(2+) is bound by residues C141, C144, C153, and C156. Positions 329-333 (KLSTS) match the 'KMSKS' region motif. T332 contributes to the ATP binding site.

The protein belongs to the class-I aminoacyl-tRNA synthetase family. MetG type 1 subfamily. As to quaternary structure, monomer. It depends on Zn(2+) as a cofactor.

Its subcellular location is the cytoplasm. It carries out the reaction tRNA(Met) + L-methionine + ATP = L-methionyl-tRNA(Met) + AMP + diphosphate. In terms of biological role, is required not only for elongation of protein synthesis but also for the initiation of all mRNA translation through initiator tRNA(fMet) aminoacylation. This Bacillus cereus (strain AH187) protein is Methionine--tRNA ligase.